Reading from the N-terminus, the 556-residue chain is Formate--tetrahydrofolate ligase (556 aa).

65 to 72 (TPAGEGKS) contacts ATP.

This sequence belongs to the formate--tetrahydrofolate ligase family.

The enzyme catalyses (6S)-5,6,7,8-tetrahydrofolate + formate + ATP = (6R)-10-formyltetrahydrofolate + ADP + phosphate. It participates in one-carbon metabolism; tetrahydrofolate interconversion. The protein is Formate--tetrahydrofolate ligase of Clostridium beijerinckii (strain ATCC 51743 / NCIMB 8052) (Clostridium acetobutylicum).